We begin with the raw amino-acid sequence, 488 residues long: MSDFIASKEDDYSKWYLDIVQKAKLADYSPVKGCMVIMPYGYSIWSKIQSILDKKFKETGHENAYFPMLIPYGFLEKEKDHIDGFSPEFAIIKDAGGESLVEPLVLRPTSETIIWNMYSKWIKSYRDLPLKINQWANVIRWEKRTRPFLRTTEFLWQEGHTAHATEEEALEETLLILDVYKRFMEDYLAIPVFCGKKSENEKFAGAVSTYSVEALMQDKKALQAATSHYLGLNFAKAFDVKFQDKDGKMKHVFASSWGVSTRLIGALIMVHSDEKGLILPPRIAPVEIIVIPIFKKEDEINKKILDYSDCVVHTLKKAEFRVEIDKDVRSSPGFRFSSAEFKGIPIRIEVGINDILLNSVTIIRRDKDRKFKYQISLDSLVSKVRVELDSMQKDLFKKALNFRTLNTKEIFRSGKDSYELFKAYVNDYSGFVLSCWCGGLNCENIIKNETKATIRCIPDDFKARDLTGMTCIYCSSKAKYYVLFAKSY.

It belongs to the class-II aminoacyl-tRNA synthetase family. ProS type 3 subfamily. In terms of assembly, homodimer.

The protein localises to the cytoplasm. The catalysed reaction is tRNA(Pro) + L-proline + ATP = L-prolyl-tRNA(Pro) + AMP + diphosphate. In terms of biological role, catalyzes the attachment of proline to tRNA(Pro) in a two-step reaction: proline is first activated by ATP to form Pro-AMP and then transferred to the acceptor end of tRNA(Pro). The protein is Proline--tRNA ligase of Borreliella afzelii (strain PKo) (Borrelia afzelii).